Consider the following 608-residue polypeptide: DNA ligase (608 aa).

Glutamate 266 serves as a coordination point for ATP. Lysine 268 (N6-AMP-lysine intermediate) is an active-site residue. ATP contacts are provided by arginine 273, arginine 288, glutamate 318, phenylalanine 358, arginine 435, and lysine 441.

Belongs to the ATP-dependent DNA ligase family. It depends on Mg(2+) as a cofactor. Mn(2+) is required as a cofactor.

It catalyses the reaction ATP + (deoxyribonucleotide)n-3'-hydroxyl + 5'-phospho-(deoxyribonucleotide)m = (deoxyribonucleotide)n+m + AMP + diphosphate.. It carries out the reaction ADP + (deoxyribonucleotide)n-3'-hydroxyl + 5'-phospho-(deoxyribonucleotide)m = (deoxyribonucleotide)n+m + AMP + phosphate.. The enzyme catalyses GTP + (deoxyribonucleotide)n-3'-hydroxyl + 5'-phospho-(deoxyribonucleotide)m = (deoxyribonucleotide)n+m + GMP + diphosphate.. Its function is as follows. DNA ligase that seals nicks in double-stranded DNA during DNA replication, DNA recombination and DNA repair. Can use ATP, ADP and GTP, but not CTP, TTP or NAD(+). This chain is DNA ligase, found in Hyperthermus butylicus (strain DSM 5456 / JCM 9403 / PLM1-5).